A 321-amino-acid polypeptide reads, in one-letter code: uncharacterized protein (321 aa).

An N-acetylvaline modification is found at V2. Residues 37 to 63 form a disordered region; that stretch reads SEASRLLTPQTSSNHALSKMQKDDDIR. The span at 43-52 shows a compositional bias: polar residues; that stretch reads LTPQTSSNHA. Phosphothreonine is present on T44. S49, S69, S121, S126, S129, S137, and S139 each carry phosphoserine. Disordered regions lie at residues 115 to 270 and 283 to 321; these read KKQR…YSIS and ETLEEEQEDAEKEGVLMEDEGNEEYTKDLEEAANKAQPQ. Polar residues-rich tracts occupy residues 120–145, 153–162, and 178–189; these read KSINSESFSSPSLRASKSNSLITSTD, KYSSSGTPEN, and SYGQMIKNNSNR. T159 carries the phosphothreonine modification. The segment covering 204-229 has biased composition (basic and acidic residues); that stretch reads EIDHTAPEKSEKRQERSGRSFDRQKS. Residues 237-253 show a composition bias toward polar residues; it reads LSRSISRGPTKNKTVSP. Phosphoserine occurs at positions 238, 240, 242, and 270. Residues 284–305 show a composition bias toward acidic residues; sequence TLEEEQEDAEKEGVLMEDEGNE. Residues 306-315 are compositionally biased toward basic and acidic residues; the sequence is EYTKDLEEAA.

The protein resides in the cytoplasm. This is an uncharacterized protein from Saccharomyces cerevisiae (strain ATCC 204508 / S288c) (Baker's yeast).